The chain runs to 314 residues: Mitochondrial thiamine pyrophosphate carrier 1 (314 aa).

Transmembrane regions (helical) follow at residues 14 to 30 (VAAW…GLLA), 84 to 100 (LLYV…YSLF), 116 to 136 (LVVG…FDVL), 170 to 186 (GSIA…SIMF), 217 to 233 (SAGT…TFPL), and 285 to 302 (GILV…VSFW). 3 Solcar repeats span residues 14–103 (VAAW…FNRY), 110–195 (EARL…IRIY), and 210–310 (ELAT…AIHY).

This sequence belongs to the mitochondrial carrier (TC 2.A.29) family.

The protein localises to the mitochondrion inner membrane. In terms of biological role, mitochondrial transporter that mediates uptake of thiamine pyrophosphate (ThPP) into mitochondria. This Saccharomyces cerevisiae (strain YJM789) (Baker's yeast) protein is Mitochondrial thiamine pyrophosphate carrier 1 (TPC1).